The primary structure comprises 499 residues: 3-octaprenyl-4-hydroxybenzoate carboxy-lyase (499 aa).

Residue N173 participates in Mn(2+) binding. Prenylated FMN is bound by residues 176-178, 190-192, and 195-196; these read IYR, RWL, and RG. Residue E239 coordinates Mn(2+). D288 functions as the Proton donor in the catalytic mechanism.

It belongs to the UbiD family. In terms of assembly, homohexamer. Requires prenylated FMN as cofactor. Mn(2+) serves as cofactor.

The protein resides in the cell membrane. It carries out the reaction a 4-hydroxy-3-(all-trans-polyprenyl)benzoate + H(+) = a 2-(all-trans-polyprenyl)phenol + CO2. It functions in the pathway cofactor biosynthesis; ubiquinone biosynthesis. Catalyzes the decarboxylation of 3-octaprenyl-4-hydroxy benzoate to 2-octaprenylphenol, an intermediate step in ubiquinone biosynthesis. This Blochmanniella floridana protein is 3-octaprenyl-4-hydroxybenzoate carboxy-lyase.